Reading from the N-terminus, the 436-residue chain is 3-ketoacyl-CoA thiolase (436 aa).

Catalysis depends on Cys-99, which acts as the Acyl-thioester intermediate. Active-site proton acceptor residues include His-392 and Cys-422.

This sequence belongs to the thiolase-like superfamily. Thiolase family. Heterotetramer of two alpha chains (FadJ) and two beta chains (FadI).

The protein localises to the cytoplasm. The catalysed reaction is an acyl-CoA + acetyl-CoA = a 3-oxoacyl-CoA + CoA. The protein operates within lipid metabolism; fatty acid beta-oxidation. Catalyzes the final step of fatty acid oxidation in which acetyl-CoA is released and the CoA ester of a fatty acid two carbons shorter is formed. This Shewanella pealeana (strain ATCC 700345 / ANG-SQ1) protein is 3-ketoacyl-CoA thiolase.